The primary structure comprises 125 residues: RxLR effector protein Avh6 (125 aa).

The N-terminal stretch at 1 to 25 is a signal peptide; it reads MRLSSTTFVVLAAVLLASGTAVSKA. The short motif at 48–70 is the RxLR-dEER element; sequence RFLRSHHTEDGKAKLSNYDNEER.

The protein belongs to the RxLR effector family.

The protein localises to the secreted. The protein resides in the host cell. Its function is as follows. Effector that suppresses plant defense responses during the early stages of pathogen infection. Suppresses cell death induced by effectors and PAMPs in plant hosts. Triggers a hypersensitive response (HR) in the presence of Rps1d. Suppresses BAX-induced cell death and enhanced P.capsici infection in Nicotiana benthamiana. Also suppresses effector-triggered immunity induction by associating with Avr1b and Rps1b, suggesting a role in suppressing plant immunity. The chain is RxLR effector protein Avh6 from Phytophthora sojae (Soybean stem and root rot agent).